The sequence spans 413 residues: Palmitoyl-acyl carrier protein thioesterase, chloroplastic (413 aa).

A chloroplast-targeting transit peptide spans 1–57 (MVATAVTSAFFPVTSSPDSSDSKNKKLGSIKSKPSVSSGSLQVKANAQAPPKINGTV). The interval 12–79 (PVTSSPDSSD…DGASSPPPRT (68 aa)) is disordered. Positions 29–40 (SIKSKPSVSSGS) are enriched in low complexity. Residues asparagine 310, histidine 312, and cysteine 347 contribute to the active site. The disordered stretch occupies residues 394 to 413 (WRPKHAKSSANMDQITAKRA).

It belongs to the acyl-ACP thioesterase family.

It is found in the plastid. The protein resides in the chloroplast. The enzyme catalyses hexadecanoyl-[ACP] + H2O = hexadecanoate + holo-[ACP] + H(+). Plays an essential role in chain termination during de novo fatty acid synthesis. High thioesterase activity for palmitoyl-ACP versus other acyl-ACPs. This is Palmitoyl-acyl carrier protein thioesterase, chloroplastic (FATB1) from Gossypium hirsutum (Upland cotton).